A 201-amino-acid chain; its full sequence is Protein lin-7 homolog B (201 aa).

The short motif at 1–13 (MAALVEPLGLERE) is the Kinase interacting site element. In terms of domain architecture, L27 spans 10–65 (LEREVSRAVELLERLQRSGELPPQKLQALQRVLQSRFCSAIREVYEQLYDTLDITG). Residues 93-175 (VVELPKTDEG…SVKLVVRYTP (83 aa)) enclose the PDZ domain.

The protein belongs to the lin-7 family. In terms of assembly, forms a complex with CASK and CASKIN1. Component of the brain-specific heterotrimeric complex (LIN-10-LIN-2-LIN-7 complex) composed of at least APBA1, CASK, and LIN7, which associates with the motor protein KIF17 to transport vesicles along microtubules. Forms a heterotrimeric complex composed of MMP5, LIN7B and PATJ; the N-terminal L27 domain of PALS1 interacts with the L27 domain of PATJ and the C-terminal L27 domain of PALS1 interacts with the L27 domain of LIN7B. Forms a heterotrimeric complex with DLG1 and CASK via their L27 domains. Interacts with DLG4 and GRIN2B as well as CDH1 and CTNNB1, the channels KCNJ12/Kir2.2, KCNJ4/Kir2.3 and probably KCNJ2/Kir2.1 and SLC6A12/BGT-1 via its PDZ domain. The association of LIN7A with cadherin and beta-catenin is calcium-dependent, occurs at synaptic junctions and requires the actin cytoskeleton. Interacts with EGFR, ERBB2, ERBB3 and ERBB4 with both PDZ and KID domains. Interacts with ASIC3. Interacts with TOPK. Interacts with RTKN. Associates with KIF17 via APBA1. Interacts with APBA1. Interacts with MPP7. Interacts with DLG2. Interacts with DLG3.

The protein resides in the cell membrane. It is found in the basolateral cell membrane. Its subcellular location is the cell junction. It localises to the postsynaptic density membrane. The protein localises to the tight junction. Functionally, plays a role in establishing and maintaining the asymmetric distribution of channels and receptors at the plasma membrane of polarized cells. Forms membrane-associated multiprotein complexes that may regulate delivery and recycling of proteins to the correct membrane domains. The tripartite complex composed of LIN7 (LIN7A, LIN7B or LIN7C), CASK and APBA1 associates with the motor protein KIF17 to transport vesicles containing N-methyl-D-aspartate (NMDA) receptor subunit NR2B along microtubules. This complex may have the potential to couple synaptic vesicle exocytosis to cell adhesion in brain. Ensures the proper localization of GRIN2B (subunit 2B of the NMDA receptor) to neuronal postsynaptic density and may function in localizing synaptic vesicles at synapses where it is recruited by beta-catenin and cadherin. Required to localize Kir2 channels, GABA transporter (SLC6A12) and EGFR/ERBB1, ERBB2, ERBB3 and ERBB4 to the basolateral membrane of epithelial cells. May increase the amplitude of ASIC3 acid-evoked currents by stabilizing the channel at the cell surface. The polypeptide is Protein lin-7 homolog B (LIN7B) (Bos taurus (Bovine)).